The following is a 167-amino-acid chain: Large ribosomal subunit protein uL5 (167 aa).

This sequence belongs to the universal ribosomal protein uL5 family. In terms of assembly, part of the 50S ribosomal subunit; contacts the 5S rRNA and probably tRNA. Forms a bridge to the 30S subunit in the 70S ribosome.

This is one of the proteins that bind and probably mediate the attachment of the 5S RNA into the large ribosomal subunit, where it forms part of the central protuberance. In the 70S ribosome it contacts protein S13 of the 30S subunit (bridge B1b), connecting the 2 subunits; this bridge is implicated in subunit movement. May contact the P site tRNA; the 5S rRNA and some of its associated proteins might help stabilize positioning of ribosome-bound tRNAs. The polypeptide is Large ribosomal subunit protein uL5 (Methanoculleus marisnigri (strain ATCC 35101 / DSM 1498 / JR1)).